Here is a 274-residue protein sequence, read N- to C-terminus: 3-methyl-2-oxobutanoate hydroxymethyltransferase (274 aa).

Residues aspartate 49 and aspartate 88 each coordinate Mg(2+). 3-methyl-2-oxobutanoate-binding positions include 49 to 50 (DS), aspartate 88, and lysine 118. Residue glutamate 120 participates in Mg(2+) binding. Glutamate 187 (proton acceptor) is an active-site residue.

It belongs to the PanB family. Homodecamer; pentamer of dimers. Requires Mg(2+) as cofactor.

It is found in the cytoplasm. It catalyses the reaction 3-methyl-2-oxobutanoate + (6R)-5,10-methylene-5,6,7,8-tetrahydrofolate + H2O = 2-dehydropantoate + (6S)-5,6,7,8-tetrahydrofolate. It participates in cofactor biosynthesis; (R)-pantothenate biosynthesis; (R)-pantoate from 3-methyl-2-oxobutanoate: step 1/2. In terms of biological role, catalyzes the reversible reaction in which hydroxymethyl group from 5,10-methylenetetrahydrofolate is transferred onto alpha-ketoisovalerate to form ketopantoate. In Paramagnetospirillum magneticum (strain ATCC 700264 / AMB-1) (Magnetospirillum magneticum), this protein is 3-methyl-2-oxobutanoate hydroxymethyltransferase.